The primary structure comprises 171 residues: Orange carotenoid-binding domain-containing protein (171 aa).

In terms of domain architecture, OCP N-terminal spans 21–171 (GDAVASTITV…ADMGVDPLAD (151 aa)).

Belongs to the orange carotenoid-binding protein family. Requires 3'-hydroxyechinenone as cofactor.

The protein resides in the cellular thylakoid membrane. Its function is as follows. Might act as a photo-protectant, protecting against damage induced by excess light via a process known as non-photochemical quenching (NPQ). The protein is Orange carotenoid-binding domain-containing protein of Nostoc sp. (strain PCC 7120 / SAG 25.82 / UTEX 2576).